A 358-amino-acid chain; its full sequence is Aerobic magnesium-protoporphyrin IX monomethyl ester [oxidative] cyclase (358 aa).

The protein belongs to the AcsF family. It depends on Fe cation as a cofactor.

It carries out the reaction Mg-protoporphyrin IX 13-monomethyl ester + 3 NADPH + 3 O2 + 2 H(+) = 3,8-divinyl protochlorophyllide a + 3 NADP(+) + 5 H2O. The protein operates within porphyrin-containing compound metabolism; chlorophyll biosynthesis. In terms of biological role, catalyzes the formation of the isocyclic ring in chlorophyll biosynthesis in aerobic conditions. Mediates the cyclase reaction, which results in the formation of divinylprotochlorophyllide (Pchlide) characteristic of all chlorophylls from magnesium-protoporphyrin IX 13-monomethyl ester (MgPMME). The protein is Aerobic magnesium-protoporphyrin IX monomethyl ester [oxidative] cyclase of Rubrivivax gelatinosus (Rhodocyclus gelatinosus).